Reading from the N-terminus, the 1091-residue chain is MKLLYTDIRTSLTEILTREAEELVAAGKRVFYIAPNSLSFEKERAVLEYLSQQASFSITVTRFAQMARYLVLNDLPAKTTLDDIGLGLAFYKCLAELDPKDLRVYGAIKQDPQLIQQLIELYHEMTKSQMSFLDLENLTDEDKRADLLLIFEKVTAYLNQGQLAQGSQLSHLIEAIENDKVSSDFNQIALVIDGFTRFSAEEERVVDLLHGKGVEIVIGAYASKKAYTSPFSEGNLYQASVKFLHHLASKYQTPAQDCSQTHEKMDSFDKASRLLESSYDFSELALDVDEKDRENLQIWSCLTQKEELELVARSIRQKLHENSDLSYKHFRILLGDVASYQLSLKTIFDQYQIPFYLGRSEAMAHHPLTQFVESILALKRYRFRQEDLINLLRTDLYTDLSQSDIDAFEQYIRYLGINGLPAFQQTFTKSHHGKFNLERLNVLRLRILAPLETLFASRKQKAENLLQKWSVFLKEGAVTKQLQDLTTTLEAVEQERQTEVWKAFCHVLEQFATVFAGSQVSLEDFLALLHSGMSLSQYRTIPATVDTVLVQSYDLIAPLTADFVYAIGLTQDNLPKISQNTSLLTDEERQNLNQTTEEGVQLLIASSENLKKNRYTMLSLVNSARKQLFLSAPSLFNESESKESAYLQELIHFGFRRREKRMNHKGLSKEDMGSYHSLLSSLVAYHQQGEMSDTEQDLTFVKVLSRVIGKKLDLQGLENPAIPTSPSSKTLTKDTLQALYPAKQEFYLSTSGLTEFYLNEYSYFLRYVLGLQEELRLRPDARSHGNFLHRIFERALQLPNEDSFDQRLEQAIQETSQEREFEAIYQESLEAQFTKEVLLDVARTTGHILRHNPAIETIKEEANFGGKDQAFIQLDNGRSVFVRGKVDRIDRLKANGAIGVVDYKSSLTQFQFPHFFNGLNSQLPTYLAALKREGEQNFFGAMYLEMAEPVQSLMAVKSLAGAVVEASKSMKYQGLFLEKESSYLGEFYNKNKANQLTDEEFQLLLDYNAYLYKKAAEKILAGRFAINPYTENGRSIAPYVQQHQAITGFEANYHLGQARFLEKLDLADGKRLVGEKLKQAWLEKIREELNR.

This sequence belongs to the helicase family. AddB/RexB type 2 subfamily. As to quaternary structure, heterodimer of AddA and RexB. Mg(2+) is required as a cofactor.

Its function is as follows. The heterodimer acts as both an ATP-dependent DNA helicase and an ATP-dependent, dual-direction single-stranded exonuclease. Recognizes the chi site generating a DNA molecule suitable for the initiation of homologous recombination. This subunit has 5' -&gt; 3' nuclease activity but not helicase activity. This is ATP-dependent helicase/deoxyribonuclease subunit B from Streptococcus pneumoniae (strain Hungary19A-6).